A 272-amino-acid chain; its full sequence is Transcription factor GAL1 (272 aa).

Positions 1-10 (MAGKNMSSRL) are enriched in polar residues. Disordered stretches follow at residues 1–49 (MAGK…SPET), 102–215 (YGAI…SRDI), and 246–272 (KGHL…AMDY). Acidic residues-rich tracts occupy residues 113–122 (ESDDDQDEEQ) and 152–174 (SEQD…DEAE). The segment covering 175-215 (LLIKAERKEAAAKLRAERKAQRKADEVKSKQMAERRRSRDI) has biased composition (basic and acidic residues). A CCHC-type zinc finger spans residues 240–255 (CHVCGQKGHLQKDCPD).

It is found in the nucleus. Transcription factor; part of the gene cluster that mediates the biosynthesis of liamocins, glycolipids (also called heavy oils) composed of a single mannitol or arabitol headgroup linked to either three, four or even six 3,5-dihydroxydecanoic ester tail-groups. Positively regulates the expression of PKS1 and EST1 that mediate the biosynthesis of liamocins. The sequence is that of Transcription factor GAL1 from Aureobasidium melanogenum (Aureobasidium pullulans var. melanogenum).